The chain runs to 450 residues: Cytochrome c1 (450 aa).

The first 21 residues, 1 to 21, serve as a signal peptide directing secretion; that stretch reads MTLRNASLTAVAALTVALAGG. Residues 24 to 58 show a composition bias toward low complexity; the sequence is AQDASTAPGTTAPAGSSYHTNEAAPAAADTAPAAE. The interval 24-210 is disordered; it reads AQDASTAPGT…AAAQEAGDSH (187 aa). Composition is skewed to acidic residues over residues 59–77, 85–108, and 118–194; these read AADEPAAEEAEAGEAEVTE, PAEEPAADEPAATEEPDAEAEPAA, and APAE…EDEA. Positions 245, 248, and 249 each coordinate heme c. Positions 284-305 are disordered; sequence PETEEDRPRVPTDHFPTVSGEG. Met373 provides a ligand contact to heme c. A helical transmembrane segment spans residues 421-435; sequence SVIFLIVLAALLYLT.

As to quaternary structure, the main subunits of complex b-c1 are: cytochrome b, cytochrome c1 and the Rieske protein. Binds 1 heme c group covalently per subunit.

The protein localises to the cell membrane. In terms of biological role, component of the ubiquinol-cytochrome c reductase complex (complex III or cytochrome b-c1 complex), which is a respiratory chain that generates an electrochemical potential coupled to ATP synthesis. c1 functions as an electron donor to cytochrome c. This Paracoccus denitrificans protein is Cytochrome c1 (petC).